Consider the following 261-residue polypeptide: Succinate dehydrogenase iron-sulfur subunit (261 aa).

Residues R28–M119 form the 2Fe-2S ferredoxin-type domain. [2Fe-2S] cluster contacts are provided by C80, C85, and C100. Positions D161–Y191 constitute a 4Fe-4S ferredoxin-type domain. 3 residues coordinate [4Fe-4S] cluster: C171, C174, and C177. Residue C181 participates in [3Fe-4S] cluster binding. Position 186 (W186) interacts with a ubiquinone. 2 residues coordinate [3Fe-4S] cluster: C228 and C234. C238 lines the [4Fe-4S] cluster pocket.

This sequence belongs to the succinate dehydrogenase/fumarate reductase iron-sulfur protein family. Part of an enzyme complex containing four subunits: a flavoprotein, an iron-sulfur, cytochrome b-556, and a hydrophobic anchor protein. [2Fe-2S] cluster is required as a cofactor. [3Fe-4S] cluster serves as cofactor. Requires [4Fe-4S] cluster as cofactor.

The enzyme catalyses a quinone + succinate = fumarate + a quinol. The protein operates within carbohydrate metabolism; tricarboxylic acid cycle; fumarate from succinate (bacterial route): step 1/1. The sequence is that of Succinate dehydrogenase iron-sulfur subunit (sdhB) from Rickettsia typhi (strain ATCC VR-144 / Wilmington).